The sequence spans 550 residues: Proteasome-associated ATPase (550 aa).

Residues 9–48 are a coiled coil; the sequence is EELARRVASLSAQNERLAQILVEARSKIVGLQQQIDDLAQ. ATP is bound at residue 233–238; sequence GCGKTL. Residues 528–550 are disordered; it reads KGEGKNPTPAKAIETPHNTGPYL. Residues 549 to 550 form a docks into pockets in the proteasome alpha-ring region; that stretch reads YL.

Belongs to the AAA ATPase family. Homohexamer. Assembles into a hexameric ring structure that caps the 20S proteasome core. Strongly interacts with the prokaryotic ubiquitin-like protein Pup through a hydrophobic interface; the interacting region of ARC lies in its N-terminal coiled-coil domain. There is one Pup binding site per ARC hexamer ring. Upon ATP-binding, the C-terminus of ARC interacts with the alpha-rings of the proteasome core, possibly by binding to the intersubunit pockets.

The protein operates within protein degradation; proteasomal Pup-dependent pathway. Its function is as follows. ATPase which is responsible for recognizing, binding, unfolding and translocation of pupylated proteins into the bacterial 20S proteasome core particle. May be essential for opening the gate of the 20S proteasome via an interaction with its C-terminus, thereby allowing substrate entry and access to the site of proteolysis. Thus, the C-termini of the proteasomal ATPase may function like a 'key in a lock' to induce gate opening and therefore regulate proteolysis. This is Proteasome-associated ATPase from Jonesia denitrificans (strain ATCC 14870 / DSM 20603 / BCRC 15368 / CIP 55.134 / JCM 11481 / NBRC 15587 / NCTC 10816 / Prevot 55134) (Listeria denitrificans).